The sequence spans 686 residues: Delta-like protein 4 (686 aa).

The N-terminal stretch at M1–A26 is a signal peptide. Topologically, residues G27–A532 are extracellular. 2 disulfide bridges follow: C51–C55 and C62–C75. N79, N109, and N162 each carry an N-linked (GlcNAc...) asparagine glycan. The 45-residue stretch at V174–C218 folds into the DSL domain. C176 and C185 form a disulfide bridge. Interaction with Notch1 regions lie at residues S186–L188 and R192–F196. Cystine bridges form between C189-C201, C209-C218, C223-C234, C227-C240, C242-C251, C254-C265, C260-C271, C273-C282, C289-C301, C295-C311, C313-C322, C329-C340, C334-C349, C351-C360, C367-C378, C372-C389, C391-C400, C407-C418, C412-C427, C429-C438, C445-C456, C450-C465, C467-C476, C485-C496, C490-C507, and C509-C518. 8 EGF-like domains span residues D219 to N252, E253 to D283, D285 to E323, G325 to E361, T364 to E401, K403 to E439, H441 to E477, and T481 to E519. A glycan (N-linked (GlcNAc...) asparagine) is linked at N297. N-linked (GlcNAc...) asparagine glycosylation occurs at N394. A helical membrane pass occupies residues V533–V553. The Cytoplasmic segment spans residues R554 to V686.

In terms of assembly, interacts with NOTCH4. Interacts (via N-terminal DSL and MNNL domains) with NOTCH1 (via EGF-like domains). In terms of tissue distribution, expressed in vascular endothelium. Expressed in retina at least during embryogenesis.

It is found in the cell membrane. Its function is as follows. Involved in the Notch signaling pathway as Notch ligand. Activates NOTCH1 and NOTCH4. Involved in angiogenesis; negatively regulates endothelial cell proliferation and migration and angiogenic sprouting. Essential for retinal progenitor proliferation. Required for suppressing rod fates in late retinal progenitors as well as for proper generation of other retinal cell types. During spinal cord neurogenesis, inhibits V2a interneuron fate. This Mus musculus (Mouse) protein is Delta-like protein 4 (Dll4).